We begin with the raw amino-acid sequence, 343 residues long: Ribosomal RNA small subunit methyltransferase C (343 aa).

This sequence belongs to the methyltransferase superfamily. RsmC family. Monomer.

It localises to the cytoplasm. It catalyses the reaction guanosine(1207) in 16S rRNA + S-adenosyl-L-methionine = N(2)-methylguanosine(1207) in 16S rRNA + S-adenosyl-L-homocysteine + H(+). Functionally, specifically methylates the guanine in position 1207 of 16S rRNA in the 30S particle. The polypeptide is Ribosomal RNA small subunit methyltransferase C (Escherichia fergusonii (strain ATCC 35469 / DSM 13698 / CCUG 18766 / IAM 14443 / JCM 21226 / LMG 7866 / NBRC 102419 / NCTC 12128 / CDC 0568-73)).